Consider the following 953-residue polypeptide: Anion exchange protein 4 (953 aa).

Residues 20-41 form a disordered region; sequence SEQLDGDLGPGSGLDGPSDIDN. The next 4 helical transmembrane spans lie at 385–405, 413–433, 470–490, and 501–521; these read AVLY…GLLG, GVLE…LMAG, VGIW…SLLV, and FCAL…LNLI. The membrane (anion exchange) stretch occupies residues 385–953; it reads AVLYIYLATV…KAPEINISVN (569 aa). Asparagine 546 and asparagine 570 each carry an N-linked (GlcNAc...) asparagine glycan. A run of 7 helical transmembrane segments spans residues 594-614, 635-655, 682-702, 728-748, 785-805, 807-827, and 869-889; these read VPDI…CAIA, FSSV…GLAT, PWWL…LIFM, LFCV…WYVS, GLVV…LKFI, MPVL…SMQF, and LWVI…LGLV. Basic and acidic residues predominate over residues 916-927; the sequence is KTIPENRPEPEH. Residues 916-938 form a disordered region; sequence KTIPENRPEPEHLFSGNDSENSE. N-linked (GlcNAc...) asparagine glycosylation is found at asparagine 932 and asparagine 949.

This sequence belongs to the anion exchanger (TC 2.A.31) family. As to expression, expressed in kidney and gastrointestinal tract. In kidney, it is highly expressed in the cortex, expressed at intermediate level in the outer medulla and not expressed in the inner medulla. It is expressed in the cecum, while it is absent in other segments of gastrointestinal tract. Highly expressed in the cortical collecting duct (CCD). Expressed in both alpha-intercalated cells and beta-intercalated cells in the CCD (at protein level).

The protein localises to the basolateral cell membrane. It catalyses the reaction 2 hydrogencarbonate(out) + chloride(in) + Na(+)(out) = 2 hydrogencarbonate(in) + chloride(out) + Na(+)(in). The catalysed reaction is K(+)(in) + 2 hydrogencarbonate(in) + chloride(out) = K(+)(out) + 2 hydrogencarbonate(out) + chloride(in). The enzyme catalyses Li(+)(in) + 2 hydrogencarbonate(in) + chloride(out) = Li(+)(out) + 2 hydrogencarbonate(out) + chloride(in). It carries out the reaction Rb(+)(in) + 2 hydrogencarbonate(in) + chloride(out) = Rb(+)(out) + 2 hydrogencarbonate(out) + chloride(in). It catalyses the reaction Cs(+)(in) + 2 hydrogencarbonate(in) + chloride(out) = Cs(+)(out) + 2 hydrogencarbonate(out) + chloride(in). With respect to regulation, 4,4'-diisothiocyanatodihydrostilbene-2,2'- disulfonic acid (H2DIDS) potently inhibits chloride/hydrogencarbonate antiporter activity with 50% inhibition at about 5 uM. Completely inhibits chloride/hydrogencarbonate antiporter activity at 200 uM of 4,4'-diisothiocyano-trans-stilbene-2,2'-disulfonic acid (DIDS). Functionally, electroneutral Cl(-)/HCO3(-) antiporter that favors chloride ion entry and efflux of hydrogencarbonate and sodium ion across the basolateral membrane and may participate in salivary secretion. Also mediates Cl(-)/HCO3(-) exchange activity in the presence of K(+) as well as Cs(+), Li(+), and Rb(+). Does not contribute to Cl(-)/HCO3(-) exchanger in the apical membrane of the upper villous epithelium. This Rattus norvegicus (Rat) protein is Anion exchange protein 4.